Consider the following 88-residue polypeptide: Small ribosomal subunit protein bS21 (88 aa).

The interval 58–88 (ARKRAQREGLLPMTPRPVAAGGAAGAARPPR) is disordered. Residues 73–88 (RPVAAGGAAGAARPPR) are compositionally biased toward low complexity.

This sequence belongs to the bacterial ribosomal protein bS21 family.

The polypeptide is Small ribosomal subunit protein bS21 (Mesorhizobium japonicum (strain LMG 29417 / CECT 9101 / MAFF 303099) (Mesorhizobium loti (strain MAFF 303099))).